Here is a 79-residue protein sequence, read N- to C-terminus: Large ribosomal subunit protein bL28 (79 aa).

The tract at residues 1 to 26 is disordered; the sequence is MAKVCQVTGKRPQSGNNVSHANKKTN. The segment covering 11 to 20 has biased composition (polar residues); that stretch reads RPQSGNNVSH.

It belongs to the bacterial ribosomal protein bL28 family.

The sequence is that of Large ribosomal subunit protein bL28 from Coxiella burnetii (strain CbuK_Q154) (Coxiella burnetii (strain Q154)).